A 272-amino-acid chain; its full sequence is Alcohol dehydrogenase-related 31 kDa protein (272 aa).

11-34 (YVADCGGIALETSKVLMTKNIAKL) provides a ligand contact to NAD(+). Ser139 contacts substrate. Catalysis depends on Tyr152, which acts as the Proton acceptor.

This sequence belongs to the short-chain dehydrogenases/reductases (SDR) family.

The sequence is that of Alcohol dehydrogenase-related 31 kDa protein (Adhr) from Drosophila melanogaster (Fruit fly).